The sequence spans 350 residues: Integrin beta-1-binding protein 2 (350 aa).

Zn(2+) contacts are provided by Cys5, Cys10, Cys24, and His27. The CHORD 1 domain occupies 5–64 (CYNKGCGQHFDPNTNLPDSCRYHPGVPIFHDALKGWSCCRKRTVDFSEFLNIKGCTVGLH). The SH3-binding signature appears at 28–31 (PGVP). 4 residues coordinate Zn(2+): Cys42, Cys43, Cys59, and His64. Residues 70 to 79 (PEVPPQPEGP) carry the SH3-binding motif. The tract at residues 72–92 (VPPQPEGPATSSLQEQKPLNT) is disordered. Polar residues predominate over residues 80–92 (ATSSLQEQKPLNT). Residues Cys150 and Cys155 each contribute to the Zn(2+) site. The CHORD 2 domain maps to 150 to 209 (CQNPGCDAVYQGPESDATPCTYHPGAPRFHEGMKSWSCCGIQTLDFGAFLAQPGCRVGRH). The SH2-binding signature appears at 159 to 162 (YQGP). 2 residues coordinate Zn(2+): Cys169 and His172. The short motif at 173–176 (PGAP) is the SH3-binding element. Cys187, Cys188, Cys204, and His209 together coordinate Zn(2+). One can recognise a CS domain in the interval 216–305 (PASCRHDWHQ…ADPGSWAQLE (90 aa)). Positions 235–238 (YGQI) match the SH2-binding motif. The interval 317–350 (GVLLEMDEEESEDSDDDLSWTEEEDEEEEEAMGE) is disordered. Acidic residues predominate over residues 321–350 (EMDEEESEDSDDDLSWTEEEDEEEEEAMGE).

As to quaternary structure, interacts with beta-1 integrin subunit. This interaction is regulated by divalent cations, and it occurs only in absence of calcium. In terms of tissue distribution, expressed in skeletal and cardiac muscles but not in other tissues. Is localized in rows flanking the Z line containing alpha-actinin.

May play a role during maturation and/or organization of muscles cells. This is Integrin beta-1-binding protein 2 (Itgb1bp2) from Mus musculus (Mouse).